The sequence spans 366 residues: Beta sliding clamp (366 aa).

It belongs to the beta sliding clamp family. In terms of assembly, forms a ring-shaped head-to-tail homodimer around DNA which binds and tethers DNA polymerases and other proteins to the DNA. The DNA replisome complex has a single clamp-loading complex (3 tau and 1 each of delta, delta', psi and chi subunits) which binds 3 Pol III cores (1 core on the leading strand and 2 on the lagging strand) each with a beta sliding clamp dimer. Additional proteins in the replisome are other copies of gamma, psi and chi, Ssb, DNA helicase and RNA primase.

It localises to the cytoplasm. Confers DNA tethering and processivity to DNA polymerases and other proteins. Acts as a clamp, forming a ring around DNA (a reaction catalyzed by the clamp-loading complex) which diffuses in an ATP-independent manner freely and bidirectionally along dsDNA. Initially characterized for its ability to contact the catalytic subunit of DNA polymerase III (Pol III), a complex, multichain enzyme responsible for most of the replicative synthesis in bacteria; Pol III exhibits 3'-5' exonuclease proofreading activity. The beta chain is required for initiation of replication as well as for processivity of DNA replication. The chain is Beta sliding clamp (dnaN) from Haemophilus influenzae (strain ATCC 51907 / DSM 11121 / KW20 / Rd).